Consider the following 574-residue polypeptide: Sulfate adenylyltransferase (574 aa).

Residues 1–169 (MANPPHGGVL…IEAINKLNHY (169 aa)) are N-terminal. Positions 170–394 (DYVALRYTPA…LRESSPPRHT (225 aa)) are catalytic. Sulfate is bound at residue Q197. ATP contacts are provided by residues 197–200 (QTRN) and 291–294 (GRDH). Residues T198, R199, and N200 contribute to the active site. Residue R199 participates in sulfate binding. A295 provides a ligand contact to sulfate. Residue V333 coordinates ATP. Residues 395 to 574 (QGFTIFLTGY…LETEGFFDRS (180 aa)) are allosteric regulation domain; adenylyl-sulfate kinase-like. 3'-phosphoadenylyl sulfate contacts are provided by residues 434–437 (DTVR), R451, 477–478 (IA), and R516.

The protein in the N-terminal section; belongs to the sulfate adenylyltransferase family. In the C-terminal section; belongs to the APS kinase family. In terms of assembly, homohexamer. Dimer of trimers.

The protein resides in the cytoplasm. It catalyses the reaction sulfate + ATP + H(+) = adenosine 5'-phosphosulfate + diphosphate. Its pathway is sulfur metabolism; hydrogen sulfide biosynthesis; sulfite from sulfate: step 1/3. Its activity is regulated as follows. Allosterically inhibited by 3'-phosphoadenosine 5'-phosphosulfate (PAPS). Its function is as follows. Catalyzes the first intracellular reaction of sulfate assimilation, forming adenosine-5'-phosphosulfate (APS) from inorganic sulfate and ATP. Plays an important role in sulfate activation as a component of the biosynthesis pathway of sulfur-containing amino acids. This is Sulfate adenylyltransferase from Aspergillus fumigatus (strain ATCC MYA-4609 / CBS 101355 / FGSC A1100 / Af293) (Neosartorya fumigata).